A 123-amino-acid polypeptide reads, in one-letter code: Small ribosomal subunit protein uS12cz/uS12cy (123 aa).

It belongs to the universal ribosomal protein uS12 family. As to quaternary structure, part of the 30S ribosomal subunit.

The protein localises to the plastid. Its subcellular location is the chloroplast. Functionally, with S4 and S5 plays an important role in translational accuracy. Located at the interface of the 30S and 50S subunits. In Platanus occidentalis (Sycamore), this protein is Small ribosomal subunit protein uS12cz/uS12cy (rps12-A).